Consider the following 197-residue polypeptide: Dephospho-CoA kinase (197 aa).

The DPCK domain occupies 5–197 (RLGLTGSIGM…IAHIRETADA (193 aa)). 13-18 (GMGKST) provides a ligand contact to ATP.

The protein belongs to the CoaE family.

The protein resides in the cytoplasm. It carries out the reaction 3'-dephospho-CoA + ATP = ADP + CoA + H(+). Its pathway is cofactor biosynthesis; coenzyme A biosynthesis; CoA from (R)-pantothenate: step 5/5. In terms of biological role, catalyzes the phosphorylation of the 3'-hydroxyl group of dephosphocoenzyme A to form coenzyme A. In Cereibacter sphaeroides (strain ATCC 17023 / DSM 158 / JCM 6121 / CCUG 31486 / LMG 2827 / NBRC 12203 / NCIMB 8253 / ATH 2.4.1.) (Rhodobacter sphaeroides), this protein is Dephospho-CoA kinase.